The chain runs to 162 residues: Nucleotide-binding protein CHU_2278 (162 aa).

This sequence belongs to the YajQ family.

In terms of biological role, nucleotide-binding protein. In Cytophaga hutchinsonii (strain ATCC 33406 / DSM 1761 / CIP 103989 / NBRC 15051 / NCIMB 9469 / D465), this protein is Nucleotide-binding protein CHU_2278.